Reading from the N-terminus, the 244-residue chain is Glucosamine-6-phosphate deaminase (244 aa).

Residue aspartate 67 is the Proton acceptor; for enolization step of the active site. The For ring-opening step role is filled by asparagine 136. Residue histidine 138 is the Proton acceptor; for ring-opening step of the active site. The active-site For ring-opening step is glutamate 143.

The protein belongs to the glucosamine/galactosamine-6-phosphate isomerase family. NagB subfamily.

It carries out the reaction alpha-D-glucosamine 6-phosphate + H2O = beta-D-fructose 6-phosphate + NH4(+). Its pathway is amino-sugar metabolism; N-acetylneuraminate degradation; D-fructose 6-phosphate from N-acetylneuraminate: step 5/5. Its function is as follows. Catalyzes the reversible isomerization-deamination of glucosamine 6-phosphate (GlcN6P) to form fructose 6-phosphate (Fru6P) and ammonium ion. This chain is Glucosamine-6-phosphate deaminase, found in Clostridium botulinum (strain Okra / Type B1).